Consider the following 468-residue polypeptide: Ribulose bisphosphate carboxylase large chain (468 aa).

Lys-5 is subject to N6,N6,N6-trimethyllysine. 2 residues coordinate substrate: Asn-114 and Thr-164. Lys-166 serves as the catalytic Proton acceptor. Lys-168 contributes to the substrate binding site. 3 residues coordinate Mg(2+): Lys-192, Asp-194, and Glu-195. Lys-192 carries the N6-carboxylysine modification. Residue His-285 is the Proton acceptor of the active site. Substrate-binding residues include Arg-286, His-318, and Ser-370.

This sequence belongs to the RuBisCO large chain family. Type I subfamily. Heterohexadecamer of 8 large chains and 8 small chains; disulfide-linked. The disulfide link is formed within the large subunit homodimers. The cofactor is Mg(2+). Post-translationally, the disulfide bond which can form in the large chain dimeric partners within the hexadecamer appears to be associated with oxidative stress and protein turnover.

It is found in the plastid. The protein resides in the chloroplast. It carries out the reaction 2 (2R)-3-phosphoglycerate + 2 H(+) = D-ribulose 1,5-bisphosphate + CO2 + H2O. The catalysed reaction is D-ribulose 1,5-bisphosphate + O2 = 2-phosphoglycolate + (2R)-3-phosphoglycerate + 2 H(+). RuBisCO catalyzes two reactions: the carboxylation of D-ribulose 1,5-bisphosphate, the primary event in carbon dioxide fixation, as well as the oxidative fragmentation of the pentose substrate in the photorespiration process. Both reactions occur simultaneously and in competition at the same active site. The chain is Ribulose bisphosphate carboxylase large chain from Datura stramonium (Jimsonweed).